Consider the following 428-residue polypeptide: GTPase Obg (428 aa).

Positions methionine 1–leucine 158 constitute an Obg domain. The OBG-type G domain occupies alanine 159–glutamate 329. GTP-binding positions include glycine 165 to serine 172, phenylalanine 190 to threonine 194, aspartate 212 to glycine 215, asparagine 282 to aspartate 285, and serine 310 to isoleucine 312. The Mg(2+) site is built by serine 172 and threonine 192. In terms of domain architecture, OCT spans lysine 350 to glutamate 428.

The protein belongs to the TRAFAC class OBG-HflX-like GTPase superfamily. OBG GTPase family. Monomer. Requires Mg(2+) as cofactor.

It is found in the cytoplasm. Its function is as follows. An essential GTPase which binds GTP, GDP and possibly (p)ppGpp with moderate affinity, with high nucleotide exchange rates and a fairly low GTP hydrolysis rate. Plays a role in control of the cell cycle, stress response, ribosome biogenesis and in those bacteria that undergo differentiation, in morphogenesis control. This is GTPase Obg from Shouchella clausii (strain KSM-K16) (Alkalihalobacillus clausii).